Consider the following 341-residue polypeptide: tRNA N6-adenosine threonylcarbamoyltransferase (341 aa).

The Fe cation site is built by His-118 and His-122. Residues 141-145, Asp-174, Gly-187, and Asn-281 contribute to the substrate site; that span reads LVSGG. Asp-309 contacts Fe cation.

Belongs to the KAE1 / TsaD family. Fe(2+) is required as a cofactor.

Its subcellular location is the cytoplasm. It carries out the reaction L-threonylcarbamoyladenylate + adenosine(37) in tRNA = N(6)-L-threonylcarbamoyladenosine(37) in tRNA + AMP + H(+). Functionally, required for the formation of a threonylcarbamoyl group on adenosine at position 37 (t(6)A37) in tRNAs that read codons beginning with adenine. Is involved in the transfer of the threonylcarbamoyl moiety of threonylcarbamoyl-AMP (TC-AMP) to the N6 group of A37, together with TsaE and TsaB. TsaD likely plays a direct catalytic role in this reaction. The sequence is that of tRNA N6-adenosine threonylcarbamoyltransferase from Desulfitobacterium hafniense (strain Y51).